We begin with the raw amino-acid sequence, 366 residues long: sn-glycerol-3-phosphate import ATP-binding protein UgpC (366 aa).

One can recognise an ABC transporter domain in the interval 4–235; sequence LSLRNVQKTY…PASTFVAGFI (232 aa). 37 to 44 provides a ligand contact to ATP; that stretch reads GPSGCGKS.

The protein belongs to the ABC transporter superfamily. sn-glycerol-3-phosphate importer (TC 3.A.1.1.3) family. In terms of assembly, the complex is composed of two ATP-binding proteins (UgpC), two transmembrane proteins (UgpA and UgpE) and a solute-binding protein (UgpB).

Its subcellular location is the cell inner membrane. It catalyses the reaction sn-glycerol 3-phosphate(out) + ATP + H2O = sn-glycerol 3-phosphate(in) + ADP + phosphate + H(+). Its function is as follows. Part of the ABC transporter complex UgpBAEC involved in sn-glycerol-3-phosphate (G3P) import. Responsible for energy coupling to the transport system. This is sn-glycerol-3-phosphate import ATP-binding protein UgpC from Cupriavidus necator (strain ATCC 17699 / DSM 428 / KCTC 22496 / NCIMB 10442 / H16 / Stanier 337) (Ralstonia eutropha).